The sequence spans 150 residues: 1,4-dihydroxy-2-naphthoyl-CoA hydrolase (150 aa).

Residue Asp-19 is part of the active site.

The protein belongs to the 4-hydroxybenzoyl-CoA thioesterase family. DHNA-CoA hydrolase subfamily.

The enzyme catalyses 1,4-dihydroxy-2-naphthoyl-CoA + H2O = 1,4-dihydroxy-2-naphthoate + CoA + H(+). It participates in cofactor biosynthesis; phylloquinone biosynthesis. The protein operates within quinol/quinone metabolism; 1,4-dihydroxy-2-naphthoate biosynthesis; 1,4-dihydroxy-2-naphthoate from chorismate: step 7/7. Its function is as follows. Catalyzes the hydrolysis of 1,4-dihydroxy-2-naphthoyl-CoA (DHNA-CoA) to 1,4-dihydroxy-2-naphthoate (DHNA), a reaction involved in phylloquinone (vitamin K1) biosynthesis. The sequence is that of 1,4-dihydroxy-2-naphthoyl-CoA hydrolase from Prochlorococcus marinus subsp. pastoris (strain CCMP1986 / NIES-2087 / MED4).